We begin with the raw amino-acid sequence, 242 residues long: Glucosamine-6-phosphate deaminase (242 aa).

D67 functions as the Proton acceptor; for enolization step in the catalytic mechanism. Residue N136 is the For ring-opening step of the active site. H138 functions as the Proton acceptor; for ring-opening step in the catalytic mechanism. Residue E143 is the For ring-opening step of the active site.

It belongs to the glucosamine/galactosamine-6-phosphate isomerase family. NagB subfamily.

It catalyses the reaction alpha-D-glucosamine 6-phosphate + H2O = beta-D-fructose 6-phosphate + NH4(+). The protein operates within amino-sugar metabolism; N-acetylneuraminate degradation; D-fructose 6-phosphate from N-acetylneuraminate: step 5/5. Functionally, catalyzes the reversible isomerization-deamination of glucosamine 6-phosphate (GlcN6P) to form fructose 6-phosphate (Fru6P) and ammonium ion. This is Glucosamine-6-phosphate deaminase from Clostridium beijerinckii (strain ATCC 51743 / NCIMB 8052) (Clostridium acetobutylicum).